We begin with the raw amino-acid sequence, 473 residues long: Cysteine--tRNA ligase (473 aa).

Cysteine 30 is a binding site for Zn(2+). The 'HIGH' region signature appears at 32-42; sequence MTVYDYCHIGH. Zn(2+) contacts are provided by cysteine 213, histidine 238, and glutamate 242. Residues 270-274 carry the 'KMSKS' region motif; sequence KMSKS. Residue lysine 273 coordinates ATP.

The protein belongs to the class-I aminoacyl-tRNA synthetase family. As to quaternary structure, monomer. Zn(2+) serves as cofactor.

The protein resides in the cytoplasm. It catalyses the reaction tRNA(Cys) + L-cysteine + ATP = L-cysteinyl-tRNA(Cys) + AMP + diphosphate. In Acinetobacter baumannii (strain ACICU), this protein is Cysteine--tRNA ligase.